Here is a 181-residue protein sequence, read N- to C-terminus: Oligoribonuclease (181 aa).

The region spanning 8–171 (LIWVDLEMTG…DDIRESIAEL (164 aa)) is the Exonuclease domain. Residue Tyr129 is part of the active site.

This sequence belongs to the oligoribonuclease family.

Its subcellular location is the cytoplasm. In terms of biological role, 3'-to-5' exoribonuclease specific for small oligoribonucleotides. In Vibrio parahaemolyticus serotype O3:K6 (strain RIMD 2210633), this protein is Oligoribonuclease.